A 777-amino-acid polypeptide reads, in one-letter code: Ribosome-releasing factor 2, mitochondrial (777 aa).

Positions 68 to 353 (AKIRNIGIMA…AITMYLPSPE (286 aa)) constitute a tr-type G domain. Residues 77–84 (AHIDAGKT), 141–145 (DTPGH), and 195–198 (NKMD) contribute to the GTP site.

It belongs to the TRAFAC class translation factor GTPase superfamily. Classic translation factor GTPase family. EF-G/EF-2 subfamily.

It localises to the mitochondrion. It carries out the reaction GTP + H2O = GDP + phosphate + H(+). In terms of biological role, mitochondrial GTPase that mediates the disassembly of ribosomes from messenger RNA at the termination of mitochondrial protein biosynthesis. Acts in collaboration with MRRF. GTP hydrolysis follows the ribosome disassembly and probably occurs on the ribosome large subunit. Not involved in the GTP-dependent ribosomal translocation step during translation elongation. The polypeptide is Ribosome-releasing factor 2, mitochondrial (Bos taurus (Bovine)).